Reading from the N-terminus, the 1482-residue chain is Cystic fibrosis transmembrane conductance regulator (1482 aa).

Residues 1 to 77 are Cytoplasmic-facing; sequence MQRSPLEKAS…KLINALRRCF (77 aa). The helical transmembrane segment at 78–98 threads the bilayer; the sequence is FWRFMFYGIILYLGEVTKAVQ. Residues 81–365 enclose the ABC transmembrane type-1 1 domain; it reads FMFYGIILYL…WAVQTWYDSL (285 aa). Residues 99–122 lie on the Extracellular side of the membrane; it reads PLLLGRIIASYDPDNKAERSIAIY. The chain crosses the membrane as a helical span at residues 123-146; that stretch reads LGVGLCLLFIVRTLLLHPAIFGPH. The Cytoplasmic portion of the chain corresponds to 147 to 195; sequence HIGMQMRIAMFSLIYKKTLKLSSRVLDKISIGQLVSLLSNNLNKFDEGL. The helical transmembrane segment at 196–216 threads the bilayer; the sequence is ALAHFVWIAPLQVTLLMGLLW. Over 217–222 the chain is Extracellular; the sequence is ELLQAS. The chain crosses the membrane as a helical span at residues 223–243; that stretch reads AFCGLAFLVVLALFQAGLGKM. The Cytoplasmic segment spans residues 244–298; the sequence is MMKYRDQRAGKINERLVITSEMIENIQSVKAYCWEEAMEKMIENLRQTELKLTRK. Residues 299 to 319 form a helical membrane-spanning segment; that stretch reads AAYVRYFNSSAFFFSGLFVVF. Residues 320–339 are Extracellular-facing; that stretch reads LSVLPYALLKGIMLRKIFTT. A helical membrane pass occupies residues 340–358; it reads ISFCIVLRMAVTRQFPWAV. Residues 359-859 are Cytoplasmic-facing; the sequence is QTWYDSLGAI…YLRYVTVHKS (501 aa). ATP is bound by residues W401, S434, 458-465, and Q493; that span reads GSTGAGKT. One can recognise an ABC transporter 1 domain in the interval 423 to 646; the sequence is NGDNSLFFSN…RPDFSSKLMG (224 aa). C524 is lipidated: S-palmitoyl cysteine. S549 and S660 each carry phosphoserine. The tract at residues 654 to 832 is disordered R region; that stretch reads TAERRNSIIT…EEINEEDLRE (179 aa). S670 bears the Phosphoserine; by PKA mark. S686 is subject to Phosphoserine. K688 participates in a covalent cross-link: Glycyl lysine isopeptide (Lys-Gly) (interchain with G-Cter in ubiquitin). A phosphoserine mark is found at S700 and S712. T717 bears the Phosphothreonine mark. Phosphoserine is present on residues S737, S768, S791, S796, and S814. A helical transmembrane segment spans residues 860–880; the sequence is LIFVLIWCLVVFLAEVAACLV. Positions 860 to 1156 constitute an ABC transmembrane type-1 2 domain; sequence LIFVLIWCLV…AVNSSIDVDS (297 aa). Residues 881-919 are Extracellular-facing; the sequence is VLCLLKKTSPQDKGNSTKGANNSYAVIITSTSAYYVFYI. 2 N-linked (GlcNAc...) asparagine glycosylation sites follow: N895 and N901. A discontinuously helical membrane pass occupies residues 920–940; it reads YVGVADGLLALGLFRGLPLVH. At 941–991 the chain is on the cytoplasmic side; sequence TLITVSKILHRKMLHSVLQAPMSTLNTLKAGGILNRFSKDIAVLDDLLPLT. A helical transmembrane segment spans residues 992 to 1012; it reads IFDFIQLLLIVIGAVAVVSVL. The Extracellular segment spans residues 1013–1014; that stretch reads KP. Residues 1015 to 1035 form a helical membrane-spanning segment; the sequence is YIFLATVPVIVAFILLRAYFL. At 1036 to 1096 the chain is on the cytoplasmic side; that stretch reads HTSQQLKQLE…TANWFLYLST (61 aa). The chain crosses the membrane as a helical span at residues 1097 to 1117; the sequence is LRWFQMRIEMIFVIFFIAVTF. The Extracellular portion of the chain corresponds to 1118–1131; the sequence is ISILTTGEGEGTVG. Residues 1132 to 1152 traverse the membrane as a helical segment; that stretch reads IILTLAMNIMSTLQWAVNSSI. The Cytoplasmic portion of the chain corresponds to 1153 to 1482; that stretch reads DVDSLMRSVS…TEEEVQETRL (330 aa). One can recognise an ABC transporter 2 domain in the interval 1212–1445; the sequence is MTVKDLTAKY…KSLFRQAISP (234 aa). Residues Y1221 and 1246–1253 each bind ATP; that span reads GRTGSGKS. Residues 1388-1482 are interaction with GORASP2; sequence RTLKQAFADC…TEEEVQETRL (95 aa). C1397 is lipidated: S-palmitoyl cysteine. The span at 1454-1464 shows a compositional bias: basic residues; the sequence is HRNSSKQRSRS. The interval 1454–1482 is disordered; it reads HRNSSKQRSRSKIAALKEETEEEVQETRL. S1458 carries the post-translational modification Phosphoserine. Positions 1472–1482 are enriched in acidic residues; that stretch reads ETEEEVQETRL. Residues 1480 to 1482 carry the PDZ-binding motif; sequence TRL.

The protein belongs to the ABC transporter superfamily. ABCC family. CFTR transporter (TC 3.A.1.202) subfamily. As to quaternary structure, monomer; does not require oligomerization for channel activity. May form oligomers in the membrane. Interacts with SLC26A3, SLC26A6 and NHERF1. Interacts with SHANK2. Interacts with MYO6. Interacts (via C-terminus) with GOPC (via PDZ domain); this promotes CFTR internalization and thereby decreases channel activity. Interacts with SLC4A7 through NHERF1. Found in a complex with MYO5B and RAB11A. Interacts with ANO1. Interacts with SLC26A8. Interacts with AHCYL1; the interaction increases CFTR activity. Interacts with CSE1L. The core-glycosylated form interacts with GORASP2 (via PDZ GRASP-type 1 domain) in respone to ER stress. Interacts with MARCHF2; the interaction leads to CFTR ubiqtuitination and degradation. Interacts with ADGRG2. Post-translationally, N-glycosylated. In terms of processing, phosphorylated; cAMP treatment promotes phosphorylation and activates the channel. Dephosphorylation decreases the ATPase activity (in vitro). Phosphorylation at PKA sites activates the channel. Phosphorylation at PKC sites enhances the response to phosphorylation by PKA. Phosphorylated by AMPK; this inhibits channel activity. Ubiquitinated, leading to its degradation in the lysosome. Deubiquitination by USP10 in early endosomes enhances its endocytic recycling to the cell membrane. Ubiquitinated by RNF185 during ER stress. Ubiquitinated by MARCHF2.

It localises to the apical cell membrane. The protein resides in the early endosome membrane. It is found in the cell membrane. The protein localises to the recycling endosome membrane. Its subcellular location is the endoplasmic reticulum membrane. It localises to the nucleus. The enzyme catalyses ATP + H2O + closed Cl(-) channel = ADP + phosphate + open Cl(-) channel.. It catalyses the reaction chloride(in) = chloride(out). The catalysed reaction is hydrogencarbonate(in) = hydrogencarbonate(out). It carries out the reaction ATP + H2O = ADP + phosphate + H(+). Epithelial ion channel that plays an important role in the regulation of epithelial ion and water transport and fluid homeostasis. Mediates the transport of chloride ions across the cell membrane. Possesses an intrinsic ATPase activity and utilizes ATP to gate its channel; the passive flow of anions through the channel is gated by cycles of ATP binding and hydrolysis by the ATP-binding domains. The ion channel is also permeable to HCO(3)(-); selectivity depends on the extracellular chloride concentration. Exerts its function also by modulating the activity of other ion channels and transporters. Contributes to the regulation of the pH and the ion content of the epithelial fluid layer. Modulates the activity of the epithelial sodium channel (ENaC) complex, in part by regulating the cell surface expression of the ENaC complex. May regulate bicarbonate secretion and salvage in epithelial cells by regulating the transporter SLC4A7. Can inhibit the chloride channel activity of ANO1. Plays a role in the chloride and bicarbonate homeostasis during sperm epididymal maturation and capacitation. The sequence is that of Cystic fibrosis transmembrane conductance regulator from Sus scrofa (Pig).